The primary structure comprises 194 residues: Phosphoheptose isomerase (194 aa).

Residues 37 to 194 enclose the SIS domain; that stretch reads ISNSFKQGGK…LIEFEMAKQA (158 aa). Position 52–54 (52–54) interacts with substrate; that stretch reads NGG. The Zn(2+) site is built by His-61 and Glu-65. Substrate is bound by residues Glu-65, 93–94, 119–121, Ser-124, and Gln-172; these read ND and STS. Positions 172 and 180 each coordinate Zn(2+).

Belongs to the SIS family. GmhA subfamily. In terms of assembly, homotetramer. Requires Zn(2+) as cofactor.

It localises to the cytoplasm. It carries out the reaction 2 D-sedoheptulose 7-phosphate = D-glycero-alpha-D-manno-heptose 7-phosphate + D-glycero-beta-D-manno-heptose 7-phosphate. The protein operates within carbohydrate biosynthesis; D-glycero-D-manno-heptose 7-phosphate biosynthesis; D-glycero-alpha-D-manno-heptose 7-phosphate and D-glycero-beta-D-manno-heptose 7-phosphate from sedoheptulose 7-phosphate: step 1/1. Its function is as follows. Catalyzes the isomerization of sedoheptulose 7-phosphate in D-glycero-D-manno-heptose 7-phosphate. This is Phosphoheptose isomerase from Haemophilus influenzae (strain PittGG).